Reading from the N-terminus, the 226-residue chain is ATP synthase subunit a (226 aa).

6 helical membrane-spanning segments follow: residues 22 to 42, 73 to 93, 102 to 122, 135 to 155, 173 to 193, and 202 to 222; these read SMNW…FWLI, IIIF…SLIP, LLLN…YLIY, LNSP…SLII, LILT…PINL, and LEIF…ILYF.

This sequence belongs to the ATPase A chain family. F-type ATPases have 2 components, CF(1) - the catalytic core - and CF(0) - the membrane proton channel. CF(1) has five subunits: alpha(3), beta(3), gamma(1), delta(1), epsilon(1). CF(0) has three main subunits: a, b and c.

Its subcellular location is the mitochondrion inner membrane. Mitochondrial membrane ATP synthase (F(1)F(0) ATP synthase or Complex V) produces ATP from ADP in the presence of a proton gradient across the membrane which is generated by electron transport complexes of the respiratory chain. F-type ATPases consist of two structural domains, F(1) - containing the extramembraneous catalytic core and F(0) - containing the membrane proton channel, linked together by a central stalk and a peripheral stalk. During catalysis, ATP synthesis in the catalytic domain of F(1) is coupled via a rotary mechanism of the central stalk subunits to proton translocation. Key component of the proton channel; it may play a direct role in the translocation of protons across the membrane. This is ATP synthase subunit a (ATP6) from Apis mellifera ligustica (Common honeybee).